Consider the following 267-residue polypeptide: Probable tetrahydroxynaphthalene reductase MYCGRDRAFT_87994 (267 aa).

The NADP(+) site is built by Ile-26, Asp-72, Asn-99, and Arg-132. Ser-149 acts as the Proton donor in catalysis. The NADP(+) site is built by Tyr-163, Lys-167, Ile-196, and Thr-198. The Proton acceptor role is filled by Tyr-163. The active-site Lowers pKa of active site Tyr is the Lys-167.

Belongs to the short-chain dehydrogenases/reductases (SDR) family. In terms of assembly, homotetramer.

The catalysed reaction is scytalone + NADP(+) = naphthalene-1,3,6,8-tetrol + NADPH + H(+). Its pathway is pigment biosynthesis; melanin biosynthesis. Probable tetrahydroxynaphthalene reductase; part of the gene cluster 29 that mediates the biosynthesis dihydroxynaphthalene (DHN)-melanin, a bluish-green pigment and a structural component of the conidial wall. Catalyzes the NADPH-dependent reduction of 1,3,6,8-tetrahydroxynaphthalene (T4HN) into (+)-scytalone. The polypeptide is Probable tetrahydroxynaphthalene reductase MYCGRDRAFT_87994 (Zymoseptoria tritici (strain CBS 115943 / IPO323) (Speckled leaf blotch fungus)).